The following is a 452-amino-acid chain: Probable dihydrolipoyllysine-residue succinyltransferase component of 2-oxoglutarate dehydrogenase complex, mitochondrial (452 aa).

In terms of domain architecture, Lipoyl-binding spans 42-117 (STRIKTPPFP…TIDQDIAVID (76 aa)). K83 is modified (N6-lipoyllysine). The tract at residues 119–225 (SAAPPEGGSA…FSRNEDRVKM (107 aa)) is disordered. Basic and acidic residues-rich tracts occupy residues 130-144 (PKKDEVKTADADAAK), 154-170 (KPIEEKPMPDLGAEQKE), and 195-209 (AKSEPVKQSKPKATE). Catalysis depends on residues H424 and D428.

This sequence belongs to the 2-oxoacid dehydrogenase family. (R)-lipoate serves as cofactor.

Its subcellular location is the mitochondrion. The enzyme catalyses N(6)-[(R)-dihydrolipoyl]-L-lysyl-[protein] + succinyl-CoA = N(6)-[(R)-S(8)-succinyldihydrolipoyl]-L-lysyl-[protein] + CoA. It functions in the pathway amino-acid degradation; L-lysine degradation via saccharopine pathway; glutaryl-CoA from L-lysine: step 6/6. The 2-oxoglutarate dehydrogenase complex catalyzes the overall conversion of 2-oxoglutarate to succinyl-CoA and CO(2). It contains multiple copies of three enzymatic components: 2-oxoglutarate dehydrogenase (E1), dihydrolipoamide succinyltransferase (E2) and lipoamide dehydrogenase (E3). The protein is Probable dihydrolipoyllysine-residue succinyltransferase component of 2-oxoglutarate dehydrogenase complex, mitochondrial (kgd2) of Schizosaccharomyces pombe (strain 972 / ATCC 24843) (Fission yeast).